The sequence spans 211 residues: Proteasome subunit beta (211 aa).

The propeptide at 1 to 9 (MDNDKYLKG) is removed in mature form; by autocatalysis. T10 serves as the catalytic Nucleophile.

Belongs to the peptidase T1B family. The 20S proteasome core is composed of 14 alpha and 14 beta subunits that assemble into four stacked heptameric rings, resulting in a barrel-shaped structure. The two inner rings, each composed of seven catalytic beta subunits, are sandwiched by two outer rings, each composed of seven alpha subunits. The catalytic chamber with the active sites is on the inside of the barrel. Has a gated structure, the ends of the cylinder being occluded by the N-termini of the alpha-subunits. Is capped at one or both ends by the proteasome regulatory ATPase, PAN.

The protein localises to the cytoplasm. The enzyme catalyses Cleavage of peptide bonds with very broad specificity.. The formation of the proteasomal ATPase PAN-20S proteasome complex, via the docking of the C-termini of PAN into the intersubunit pockets in the alpha-rings, triggers opening of the gate for substrate entry. Interconversion between the open-gate and close-gate conformations leads to a dynamic regulation of the 20S proteasome proteolysis activity. Component of the proteasome core, a large protease complex with broad specificity involved in protein degradation. The polypeptide is Proteasome subunit beta (Methanosarcina barkeri (strain Fusaro / DSM 804)).